We begin with the raw amino-acid sequence, 246 residues long: Deoxycytidylate 5-hydroxymethyltransferase (246 aa).

Residue cysteine 148 is part of the active site.

The protein belongs to the thymidylate synthase family.

The catalysed reaction is dCMP + (6R)-5,10-methylene-5,6,7,8-tetrahydrofolate + H2O = 5-hydroxymethyl-dCMP + (6S)-5,6,7,8-tetrahydrofolate. The chain is Deoxycytidylate 5-hydroxymethyltransferase (42) from Enterobacteria phage T4 (Bacteriophage T4).